We begin with the raw amino-acid sequence, 552 residues long: MAGUK p55 subfamily member 2 (552 aa).

L27 domains lie at 8–59 and 60–118; these read SESA…EETK and LEAV…YETP. S42 carries the phosphoserine modification. At T117 the chain carries Phosphothreonine. S121 bears the Phosphoserine mark. Residues 140–219 form the PDZ domain; that stretch reads MVGIRKTAGE…SVILKILPSY (80 aa). Residues 225–293 form the SH3 domain; sequence PRQVFVKCHF…PSQLLEEKRK (69 aa). Residues 350–537 form the Guanylate kinase-like domain; the sequence is RKTLVLIGAQ…TFRELQTAME (188 aa).

The protein belongs to the MAGUK family. In terms of assembly, can homomultimerise. Interacts with CACNG2. Interacts (via the SH3-Guanylate kinase-like sub-module) with DLG4/PSD95 and DLGAP1/GKAP. Interacts (via the PDZ domain) with CADM1 (via C-terminus). Interacts with KCNN2/SK2 (via N-terminal domain). Interacts with SRC. Phosphorylated by SRC. As to expression, expressed in pyramidal neurons of CA1 region of the hippocampus.

The protein localises to the cell projection. It is found in the dendrite. Its subcellular location is the postsynaptic density. The protein resides in the cytoplasm. It localises to the cytoskeleton. The protein localises to the membrane. Its function is as follows. Postsynaptic MAGUK scaffold protein that links CADM1 cell adhesion molecules to core components of the postsynaptic density. In CA1 pyramidal neurons, required for synaptic KCNN2-containing channel function and long-term potentiation expression. Seems to negatively regulate SRC function in epithelial cells. This Mus musculus (Mouse) protein is MAGUK p55 subfamily member 2.